Consider the following 212-residue polypeptide: Cyclin-dependent kinase inhibitor 3 (212 aa).

A compositionally biased stretch (polar residues) spans methionine 1–phenylalanine 12. The segment at methionine 1–glutamate 23 is disordered. The interaction with CDK2 stretch occupies residues methionine 1–leucine 34. Over residues aspartate 13–glutamate 23 the composition is skewed to acidic residues. A Tyrosine-protein phosphatase domain is found at leucine 32–serine 201. Catalysis depends on cysteine 140, which acts as the Phosphocysteine intermediate.

Belongs to the protein-tyrosine phosphatase family. Interacts with cyclin-dependent kinases such as CDK1, CDK2 and CDK3. Does not interact with CDK4. Interacts (via C-terminus) with phosphorylated CDK2 (via C-terminal helix). Interacts with MS4A3 (via C-terminus); the interaction enhances CDKN3 enzymatic activity.

The protein resides in the cytoplasm. Its subcellular location is the perinuclear region. The catalysed reaction is O-phospho-L-tyrosyl-[protein] + H2O = L-tyrosyl-[protein] + phosphate. It carries out the reaction O-phospho-L-seryl-[protein] + H2O = L-seryl-[protein] + phosphate. It catalyses the reaction O-phospho-L-threonyl-[protein] + H2O = L-threonyl-[protein] + phosphate. May play a role in cell cycle regulation. Dual specificity phosphatase active toward substrates containing either phosphotyrosine or phosphoserine residues. Dephosphorylates CDK2 at 'Thr-160' in a cyclin-dependent manner. The chain is Cyclin-dependent kinase inhibitor 3 from Sus scrofa (Pig).